The primary structure comprises 997 residues: P3N-PIPO polyprotein (997 aa).

The region spanning 173-313 (IVCVDDVNNL…VLFYSDVEHY (141 aa)) is the Peptidase S30 domain. Residues Glu-235 and Ser-267 each act as for P1 proteinase activity in the active site. Positions 365-368 (KLSC) match the Involved in interaction with stylet and aphid transmission motif. An Involved in virions binding and aphid transmission motif is present at residues 621–623 (PTK). The Peptidase C6 domain maps to 647–769 (MYIAKEGYCY…QSEMKHYRVG (123 aa)). Residues Cys-655 and His-728 each act as for helper component proteinase activity in the active site.

The protein belongs to the potyviridae P3N-PIPO polyprotein family. As to quaternary structure, interacts (via PIPO domain) with host PCaP1 protein; this interaction may help to anchor the movement complex to the plasma membrane from which the complex could move to the plasmodesmata. In terms of processing, potyviral RNA is expressed as two polyproteins which undergo post-translational proteolytic processing. Genome polyprotein is processed by NIa-pro, P1 and HC-pro proteinases resulting in the production of at least ten individual proteins. P3N-PIPO is cleaved by P1 and HC-pro proteinases resulting in the production of three individual proteins. The P1 proteinase and the HC-pro cleave only their respective C-termini autocatalytically.

Its subcellular location is the host cell junction. It is found in the host plasmodesma. It carries out the reaction Hydrolyzes a Gly-|-Gly bond at its own C-terminus, commonly in the sequence -Tyr-Xaa-Val-Gly-|-Gly, in the processing of the potyviral polyprotein.. Required for aphid transmission and also has proteolytic activity. Only cleaves a Gly-Gly dipeptide at its own C-terminus. Interacts with virions and aphid stylets. Acts as a suppressor of RNA-mediated gene silencing, also known as post-transcriptional gene silencing (PTGS), a mechanism of plant viral defense that limits the accumulation of viral RNAs. May have RNA-binding activity. In terms of biological role, allows efficient cell to cell propagation, by bypassing the host cell wall barrier. Transports viral genome to neighboring plant cells directly through plasmosdesmata, without any budding. In Citrullus lanatus (Watermelon), this protein is P3N-PIPO polyprotein.